Here is a 525-residue protein sequence, read N- to C-terminus: GMP synthase [glutamine-hydrolyzing] (525 aa).

In terms of domain architecture, Glutamine amidotransferase type-1 spans arginine 9–leucine 207. Cysteine 86 acts as the Nucleophile in catalysis. Catalysis depends on residues histidine 181 and glutamate 183. In terms of domain architecture, GMPS ATP-PPase spans tryptophan 208–arginine 400. ATP is bound at residue serine 235–serine 241.

In terms of assembly, homodimer.

It catalyses the reaction XMP + L-glutamine + ATP + H2O = GMP + L-glutamate + AMP + diphosphate + 2 H(+). Its pathway is purine metabolism; GMP biosynthesis; GMP from XMP (L-Gln route): step 1/1. Functionally, catalyzes the synthesis of GMP from XMP. This Salmonella schwarzengrund (strain CVM19633) protein is GMP synthase [glutamine-hydrolyzing].